The following is a 1403-amino-acid chain: Sushi, nidogen and EGF-like domain-containing protein 1 (1403 aa).

An N-terminal signal peptide occupies residues 1 to 24; it reads MRLGAAWALLLAAALGLGTRGVRA. Positions 103 to 258 constitute an NIDO domain; that stretch reads AFWADVDNRR…GRWAFRIDDA (156 aa). EGF-like domains follow at residues 268 to 309, 311 to 347, and 349 to 385; these read TTSV…RRCH, DVNE…PTCE, and AQSP…ATCE. Intrachain disulfides connect cysteine 272–cysteine 284, cysteine 278–cysteine 297, cysteine 299–cysteine 308, cysteine 315–cysteine 326, cysteine 320–cysteine 335, cysteine 337–cysteine 346, cysteine 353–cysteine 364, cysteine 358–cysteine 373, cysteine 375–cysteine 384, cysteine 391–cysteine 402, cysteine 396–cysteine 411, cysteine 413–cysteine 422, cysteine 433–cysteine 444, cysteine 438–cysteine 453, cysteine 455–cysteine 464, cysteine 472–cysteine 480, cysteine 474–cysteine 488, and cysteine 490–cysteine 499. An N-linked (GlcNAc...) asparagine glycan is attached at asparagine 292. One can recognise an EGF-like 4; calcium-binding domain in the interval 387–423; it reads DVDECSSDPCQNGGSCVDLVGNYSCICVEPFEGPQCE. Asparagine 408 is a glycosylation site (N-linked (GlcNAc...) asparagine). EGF-like domains lie at 429-465 and 468-500; these read VPSP…LDCR and ILND…LLCE. N-linked (GlcNAc...) asparagine glycosylation is present at asparagine 484. A glycan (N-linked (GlcNAc...) asparagine) is linked at asparagine 536. EGF-like domains lie at 541–577, 580–616, 619–655, and 657–693; these read LPSP…RHCE, RPHL…RHCE, KPDS…RHCE, and APSP…HRCQ. Disulfide bonds link cysteine 545–cysteine 556, cysteine 550–cysteine 565, cysteine 567–cysteine 576, cysteine 584–cysteine 595, cysteine 589–cysteine 604, cysteine 606–cysteine 615, cysteine 623–cysteine 634, cysteine 628–cysteine 643, cysteine 645–cysteine 654, cysteine 661–cysteine 672, cysteine 666–cysteine 681, cysteine 683–cysteine 692, cysteine 698–cysteine 739, cysteine 724–cysteine 751, cysteine 757–cysteine 768, cysteine 762–cysteine 777, cysteine 779–cysteine 788, cysteine 795–cysteine 806, cysteine 800–cysteine 815, cysteine 817–cysteine 826, cysteine 833–cysteine 844, cysteine 838–cysteine 853, cysteine 855–cysteine 864, cysteine 871–cysteine 882, cysteine 876–cysteine 891, and cysteine 893–cysteine 902. In terms of domain architecture, Sushi spans 696–753; it reads VDCGHPEEVEHATMRFNGTHVGSVALYTCEPGFSLSALSHIRVCQPQGVWSQPPQCIE. Asparagine 712 carries an N-linked (GlcNAc...) asparagine glycan. One can recognise an EGF-like 11; calcium-binding domain in the interval 753–789; the sequence is EVDECRSQPCLHGGSCQDLIADYQCLCSPGYEGVHCE. In terms of domain architecture, EGF-like 12; calcium-binding spans 791-827; that stretch reads ETDECQAQPCRNGGSCRDLPRAFICQCPEGFVGIHCE. 2 consecutive EGF-like domains span residues 829 to 865 and 867 to 903; these read EVDA…YNCE and VSDP…KDCT. N-linked (GlcNAc...) asparagine glycosylation is present at asparagine 886. 3 Fibronectin type-III domains span residues 908–1006, 1007–1105, and 1106–1200; these read PPTA…TRPR, PIED…TRPL, and PPAN…SPRD. Residues asparagine 977, asparagine 1015, asparagine 1109, asparagine 1139, and asparagine 1298 are each glycosylated (N-linked (GlcNAc...) asparagine). An EGF-like 15 domain is found at 1306 to 1342; it reads TPGSCSEDACQNGGTCVPGADAHSCDCRPGFKGRHCE. Cystine bridges form between cysteine 1310/cysteine 1321, cysteine 1315/cysteine 1330, and cysteine 1332/cysteine 1341.

Post-translationally, phosphorylated on serine and threonine residues. In terms of processing, N-glycosylated. In terms of tissue distribution, expressed in lung.

The protein localises to the secreted. It is found in the extracellular space. Its subcellular location is the extracellular matrix. The chain is Sushi, nidogen and EGF-like domain-containing protein 1 from Mus musculus (Mouse).